Reading from the N-terminus, the 858-residue chain is Bifunctional uridylyltransferase/uridylyl-removing enzyme (858 aa).

A uridylyltransferase region spans residues 1–324 (MSASVAEPPP…PATSGVTRVL (324 aa)). The interval 325–681 (SPGRFVEKQG…ARPSPVGDAL (357 aa)) is uridylyl-removing. Residues 443–565 (VDQHILMVLR…VGSERRLTAL (123 aa)) form the HD domain. ACT domains lie at 682-761 (QVLV…PEPS) and 790-858 (ILSV…AIAV).

This sequence belongs to the GlnD family. Mg(2+) serves as cofactor.

The catalysed reaction is [protein-PII]-L-tyrosine + UTP = [protein-PII]-uridylyl-L-tyrosine + diphosphate. The enzyme catalyses [protein-PII]-uridylyl-L-tyrosine + H2O = [protein-PII]-L-tyrosine + UMP + H(+). With respect to regulation, uridylyltransferase (UTase) activity is inhibited by glutamine, while glutamine activates uridylyl-removing (UR) activity. Functionally, modifies, by uridylylation and deuridylylation, the PII regulatory proteins (GlnB and homologs), in response to the nitrogen status of the cell that GlnD senses through the glutamine level. Under low glutamine levels, catalyzes the conversion of the PII proteins and UTP to PII-UMP and PPi, while under higher glutamine levels, GlnD hydrolyzes PII-UMP to PII and UMP (deuridylylation). Thus, controls uridylylation state and activity of the PII proteins, and plays an important role in the regulation of nitrogen assimilation and metabolism. The protein is Bifunctional uridylyltransferase/uridylyl-removing enzyme of Burkholderia mallei (strain ATCC 23344).